A 232-amino-acid chain; its full sequence is Vesicle transport through interaction with t-SNAREs homolog 1B (232 aa).

Ala-2 bears the N-acetylalanine mark. 2 interaction with CLINT1 regions span residues 2–23 and 69–73; these read ATSA…GLHE and APLSF. The Cytoplasmic segment spans residues 2-208; the sequence is ATSAASSEHF…SRKVTTNKLL (207 aa). The stretch at 35–98 forms a coiled coil; sequence MAGTEEKKKL…AKLHREVRST (64 aa). Thr-103 is subject to Phosphothreonine. The residue at position 107 (Arg-107) is an Omega-N-methylarginine. A Phosphoserine modification is found at Ser-138. Residues 161-198 are a coiled coil; sequence SEIIEELGEQRDQLERTKSRLVNTSENLSKSRKILRSM. A helical; Anchor for type IV membrane protein transmembrane segment spans residues 209 to 229; that stretch reads LSIVILLELAILGGLVYYKFL. Topologically, residues 230-232 are vesicular; sequence RRH.

It belongs to the VTI1 family. Forms a SNARE complex with STX7, STX8 and VAMP8 which functions in the homotypic fusion of late endosomes. Component of the SNARE complex composed of STX7, STX8, VAMP7 and VIT1B that is required for heterotypic fusion of late endosomes with lysosomes. May interact with STX17. Interacts with CLINT1.

It localises to the early endosome membrane. Its subcellular location is the late endosome membrane. The protein resides in the lysosome membrane. It is found in the cytoplasmic granule. The protein localises to the recycling endosome membrane. Its function is as follows. V-SNARE that mediates vesicle transport pathways through interactions with t-SNAREs on the target membrane. These interactions are proposed to mediate aspects of the specificity of vesicle trafficking and to promote fusion of the lipid bilayers. May be concerned with increased secretion of cytokines associated with cellular senescence. In Bos taurus (Bovine), this protein is Vesicle transport through interaction with t-SNAREs homolog 1B (VTI1B).